A 428-amino-acid chain; its full sequence is Elongation factor 1-alpha (428 aa).

The tr-type G domain maps to 5 to 225; the sequence is KPILNVAFIG…DAFQPPEKPT (221 aa). Residues 14 to 21 are G1; that stretch reads GHVDAGKS. 14 to 21 is a GTP binding site; sequence GHVDAGKS. Ser-21 lines the Mg(2+) pocket. Residues 70-74 are G2; sequence GVTID. Residues 91–94 form a G3 region; sequence DCPG. GTP contacts are provided by residues 91-95 and 149-152; these read DCPGH and NKMD. Residues 149 to 152 form a G4 region; the sequence is NKMD. Positions 189–191 are G5; it reads ASL.

Belongs to the TRAFAC class translation factor GTPase superfamily. Classic translation factor GTPase family. EF-Tu/EF-1A subfamily.

The protein localises to the cytoplasm. It carries out the reaction GTP + H2O = GDP + phosphate + H(+). In terms of biological role, GTP hydrolase that promotes the GTP-dependent binding of aminoacyl-tRNA to the A-site of ribosomes during protein biosynthesis. The chain is Elongation factor 1-alpha from Methanococcus maripaludis (strain C7 / ATCC BAA-1331).